The chain runs to 130 residues: uncharacterized protein (130 aa).

This sequence belongs to the HesB/IscA family.

This is an uncharacterized protein from Buchnera aphidicola subsp. Acyrthosiphon pisum (strain APS) (Acyrthosiphon pisum symbiotic bacterium).